The sequence spans 66 residues: Large ribosomal subunit protein bL33 (66 aa).

Belongs to the bacterial ribosomal protein bL33 family.

The chain is Large ribosomal subunit protein bL33 from Wolbachia pipientis subsp. Culex pipiens (strain wPip).